The sequence spans 192 residues: Cytochrome c oxidase assembly protein CtaG (192 aa).

Residues 1–9 (MSLSPHQKT) lie on the Cytoplasmic side of the membrane. The chain crosses the membrane as a helical; Signal-anchor for type II membrane protein span at residues 10 to 30 (AGWLVGVVVVMGAASFAAVPF). At 31-192 (YDWFCRVTGF…AARPAGIDVN (162 aa)) the chain is on the periplasmic side.

Belongs to the COX11/CtaG family.

The protein localises to the cell inner membrane. Exerts its effect at some terminal stage of cytochrome c oxidase synthesis, probably by being involved in the insertion of the copper B into subunit I. This Cereibacter sphaeroides (strain ATCC 17025 / ATH 2.4.3) (Rhodobacter sphaeroides) protein is Cytochrome c oxidase assembly protein CtaG.